The primary structure comprises 489 residues: GDP-fucose protein O-fucosyltransferase 4 (489 aa).

Residues 1 to 7 are Cytoplasmic-facing; it reads MAARCTE. The chain crosses the membrane as a helical; Signal-anchor for type II membrane protein span at residues 8 to 24; the sequence is AVLAALGVLSVCSASSS. At 25–489 the chain is on the lumenal side; it reads GSEASGEAER…EIFMKRNKNL (465 aa). Residue Asn-162 is glycosylated (N-linked (GlcNAc...) asparagine). Cys-385 and Cys-388 form a disulfide bridge.

The protein belongs to the glycosyltransferase 10 family. Widely expressed. Expressed at slightly higher level in heart, kidney and lung.

It localises to the endoplasmic reticulum membrane. The enzyme catalyses L-threonyl-[protein] + GDP-beta-L-fucose = 3-O-(alpha-L-fucosyl)-L-threonyl-[protein] + GDP + H(+). It carries out the reaction L-seryl-[protein] + GDP-beta-L-fucose = 3-O-(alpha-L-fucosyl)-L-seryl-[protein] + GDP + H(+). Its pathway is protein modification; protein glycosylation. In terms of biological role, protein O-fucosyltransferase that specifically catalyzes O-fucosylation of serine or threonine residues in EMI domains of target proteins, such as MMRN1, MMRN2 and EMID1. Attaches fucose through an O-glycosidic linkage. O-fucosylation of EMI domain-containing proteins may be required for facilitating protein folding and secretion. Also shows minor alpha-(1,3)-fucosyltransferase activity toward activity toward biantennary N-glycan acceptors. However, this was tested with a library of synthetic substrates and this activity is unsure in vivo. This chain is GDP-fucose protein O-fucosyltransferase 4 (Fut11), found in Mus musculus (Mouse).